A 377-amino-acid chain; its full sequence is RIB43A-like with coiled-coils protein 2 (377 aa).

Residues 217 to 246 (NKNQVVELTERKRQEKQQEQEDNMTEITNL) are a coiled coil. Residues 354 to 377 (KQMNTASSSQPTEDYFSQFNTRSR) form a disordered region.

It belongs to the RIB43A family. Microtubule inner protein component of sperm flagellar doublet microtubules.

It localises to the cytoplasm. It is found in the cytoskeleton. The protein resides in the cilium axoneme. The protein localises to the flagellum axoneme. In terms of biological role, microtubule inner protein (MIP) part of the dynein-decorated doublet microtubules (DMTs) in cilia axoneme, which is required for motile cilia beating. The polypeptide is RIB43A-like with coiled-coils protein 2 (Mus musculus (Mouse)).